Consider the following 265-residue polypeptide: Undecaprenyl-diphosphatase 1 (265 aa).

7 consecutive transmembrane segments (helical) span residues I4 to S24, A42 to H62, F84 to I104, L108 to A128, S184 to L204, M217 to L237, and L245 to L265.

The protein belongs to the UppP family.

The protein localises to the cell membrane. It catalyses the reaction di-trans,octa-cis-undecaprenyl diphosphate + H2O = di-trans,octa-cis-undecaprenyl phosphate + phosphate + H(+). Functionally, catalyzes the dephosphorylation of undecaprenyl diphosphate (UPP). Confers resistance to bacitracin. The protein is Undecaprenyl-diphosphatase 1 of Bacillus anthracis.